The following is a 67-amino-acid chain: Large ribosomal subunit protein uL30 (67 aa).

It belongs to the universal ribosomal protein uL30 family. As to quaternary structure, part of the 50S ribosomal subunit.

This Hamiltonella defensa subsp. Acyrthosiphon pisum (strain 5AT) protein is Large ribosomal subunit protein uL30.